Consider the following 213-residue polypeptide: Ribosomal RNA small subunit methyltransferase G (213 aa).

S-adenosyl-L-methionine-binding positions include Gly-83, Leu-88, 132–133 (IE), and Arg-146.

It belongs to the methyltransferase superfamily. RNA methyltransferase RsmG family.

It is found in the cytoplasm. The catalysed reaction is guanosine(527) in 16S rRNA + S-adenosyl-L-methionine = N(7)-methylguanosine(527) in 16S rRNA + S-adenosyl-L-homocysteine. In terms of biological role, specifically methylates the N7 position of guanine in position 527 of 16S rRNA. This Granulibacter bethesdensis (strain ATCC BAA-1260 / CGDNIH1) protein is Ribosomal RNA small subunit methyltransferase G.